A 70-amino-acid polypeptide reads, in one-letter code: Bowman-Birk type proteinase inhibitor A7 (70 aa).

Intrachain disulfides connect cysteine 12–cysteine 31, cysteine 18–cysteine 29, cysteine 38–cysteine 45, and cysteine 42–cysteine 59.

Belongs to the Bowman-Birk serine protease inhibitor family. As to expression, expressed in bulb (at protein level).

In terms of biological role, serine protease inhibitor. Strongly inhibits trypsin (Ki = 7.1 nM) and almost completely inhibits elastase. Also inhibits chymotrypsin (Ki = 19 nM). Does not inhibit bacterial subtilisin. This chain is Bowman-Birk type proteinase inhibitor A7, found in Hyacinthus orientalis (Common hyacinth).